We begin with the raw amino-acid sequence, 781 residues long: 5-methyltetrahydropteroyltriglutamate--homocysteine methyltransferase (781 aa).

5-methyltetrahydropteroyltri-L-glutamate contacts are provided by residues 20 to 23 and K131; that span reads RELK. L-homocysteine contacts are provided by residues 453-455 and E506; that span reads IGS. Residues 453–455 and E506 each bind L-methionine; that span reads IGS. 5-methyltetrahydropteroyltri-L-glutamate contacts are provided by residues 537–538 and W583; that span reads RC. D621 contacts L-homocysteine. D621 contacts L-methionine. Position 627 (E627) interacts with 5-methyltetrahydropteroyltri-L-glutamate. The Zn(2+) site is built by H663, C665, and E687. The Proton donor role is filled by H716. C748 contributes to the Zn(2+) binding site.

This sequence belongs to the vitamin-B12 independent methionine synthase family. The cofactor is Zn(2+).

It catalyses the reaction 5-methyltetrahydropteroyltri-L-glutamate + L-homocysteine = tetrahydropteroyltri-L-glutamate + L-methionine. It participates in amino-acid biosynthesis; L-methionine biosynthesis via de novo pathway; L-methionine from L-homocysteine (MetE route): step 1/1. In terms of biological role, catalyzes the transfer of a methyl group from 5-methyltetrahydrofolate to homocysteine resulting in methionine formation. The protein is 5-methyltetrahydropteroyltriglutamate--homocysteine methyltransferase of Bradyrhizobium diazoefficiens (strain JCM 10833 / BCRC 13528 / IAM 13628 / NBRC 14792 / USDA 110).